The following is a 371-amino-acid chain: Ferredoxin--NADP reductase, apicoplast (371 aa).

An apicoplast-targeting transit peptide spans 1 to 18 (MKIRFVFILSVLISGVCC). Residues lysine 68, 155–159 (ARLYS), 172–179 (AIKIHKYE), 192–194 (YCS), and threonine 235 contribute to the FAD site. The region spanning 68–218 (KNPLKCKIVD…TGAHGYFNLP (151 aa)) is the FAD-binding FR-type domain. Lysine 174 serves as a coordination point for NADP(+). NADP(+) is bound by residues 272 to 273 (VY), serine 302, 313 to 315 (YVQ), and 341 to 343 (HKS). Residues lysine 342 and tyrosine 371 each contribute to the FAD site.

It belongs to the ferredoxin--NADP reductase type 1 family. In terms of assembly, monomer. Homodimer; disulfide linked. NADP binding accelerates formation of an inactive, disulfide-linked homodimer when the protein is exposed to air for 24 hours or more (in vitro); the physiological relevance of this is uncertain. The cofactor is FAD.

Its subcellular location is the plastid. The protein localises to the apicoplast. It carries out the reaction 2 reduced [2Fe-2S]-[ferredoxin] + NADP(+) + H(+) = 2 oxidized [2Fe-2S]-[ferredoxin] + NADPH. Its function is as follows. May play a role in the terminal step of the DOXP/MEP pathway for isoprenoid precursor biosynthesis. This Plasmodium falciparum (isolate 3D7) protein is Ferredoxin--NADP reductase, apicoplast.